The sequence spans 230 residues: ATP synthase subunit a (230 aa).

6 helical membrane-spanning segments follow: residues 16-36 (LVLFIPMTLTAVFLNLSWLSI), 73-93 (WVSAFTAIFILIFSINVLGLL), 106-126 (TYSIGVPLWMSVNILGFYLAF), 142-162 (LIPFMVIIETISLFAQPIALG), 165-185 (LAANLTAGHLLIFLLSTAIWT), and 192-212 (IASITLLIFFFLFLLEIGVAC).

This sequence belongs to the ATPase A chain family. F-type ATPases have 2 components, CF(1) - the catalytic core - and CF(0) - the membrane proton channel. CF(1) has five subunits: alpha(3), beta(3), gamma(1), delta(1), epsilon(1). CF(0) has three main subunits: a, b and c.

It is found in the mitochondrion inner membrane. Mitochondrial membrane ATP synthase (F(1)F(0) ATP synthase or Complex V) produces ATP from ADP in the presence of a proton gradient across the membrane which is generated by electron transport complexes of the respiratory chain. F-type ATPases consist of two structural domains, F(1) - containing the extramembraneous catalytic core and F(0) - containing the membrane proton channel, linked together by a central stalk and a peripheral stalk. During catalysis, ATP synthesis in the catalytic domain of F(1) is coupled via a rotary mechanism of the central stalk subunits to proton translocation. Key component of the proton channel; it may play a direct role in the translocation of protons across the membrane. The chain is ATP synthase subunit a (ATP6) from Patiria pectinifera (Starfish).